Consider the following 461-residue polypeptide: Bifunctional protein GlmU (461 aa).

The pyrophosphorylase stretch occupies residues 1-243 (MNATVPSAAP…EDELRGINSR (243 aa)). UDP-N-acetyl-alpha-D-glucosamine contacts are provided by residues 24 to 27 (LAAG), K38, Q86, 91 to 92 (GT), 112 to 114 (YGD), G155, E169, N184, and N241. D114 is a Mg(2+) binding site. Residue N241 coordinates Mg(2+). Residues 244 to 264 (AELAEAEACVQRRLRAAALDG) form a linker region. Residues 265–461 (GATLVAPETV…AALRRKKEQG (197 aa)) form an N-acetyltransferase region. 2 residues coordinate UDP-N-acetyl-alpha-D-glucosamine: R330 and K348. The active-site Proton acceptor is the H360. Residues Y363 and N374 each contribute to the UDP-N-acetyl-alpha-D-glucosamine site. Residues A377, 383–384 (NY), S402, A420, and R437 each bind acetyl-CoA.

It in the N-terminal section; belongs to the N-acetylglucosamine-1-phosphate uridyltransferase family. This sequence in the C-terminal section; belongs to the transferase hexapeptide repeat family. In terms of assembly, homotrimer. Mg(2+) is required as a cofactor.

It is found in the cytoplasm. The catalysed reaction is alpha-D-glucosamine 1-phosphate + acetyl-CoA = N-acetyl-alpha-D-glucosamine 1-phosphate + CoA + H(+). It catalyses the reaction N-acetyl-alpha-D-glucosamine 1-phosphate + UTP + H(+) = UDP-N-acetyl-alpha-D-glucosamine + diphosphate. Its pathway is nucleotide-sugar biosynthesis; UDP-N-acetyl-alpha-D-glucosamine biosynthesis; N-acetyl-alpha-D-glucosamine 1-phosphate from alpha-D-glucosamine 6-phosphate (route II): step 2/2. It participates in nucleotide-sugar biosynthesis; UDP-N-acetyl-alpha-D-glucosamine biosynthesis; UDP-N-acetyl-alpha-D-glucosamine from N-acetyl-alpha-D-glucosamine 1-phosphate: step 1/1. The protein operates within bacterial outer membrane biogenesis; LPS lipid A biosynthesis. Functionally, catalyzes the last two sequential reactions in the de novo biosynthetic pathway for UDP-N-acetylglucosamine (UDP-GlcNAc). The C-terminal domain catalyzes the transfer of acetyl group from acetyl coenzyme A to glucosamine-1-phosphate (GlcN-1-P) to produce N-acetylglucosamine-1-phosphate (GlcNAc-1-P), which is converted into UDP-GlcNAc by the transfer of uridine 5-monophosphate (from uridine 5-triphosphate), a reaction catalyzed by the N-terminal domain. The sequence is that of Bifunctional protein GlmU from Gluconacetobacter diazotrophicus (strain ATCC 49037 / DSM 5601 / CCUG 37298 / CIP 103539 / LMG 7603 / PAl5).